The primary structure comprises 151 residues: Large ribosomal subunit protein bL9 (151 aa).

This sequence belongs to the bacterial ribosomal protein bL9 family.

Functionally, binds to the 23S rRNA. This chain is Large ribosomal subunit protein bL9, found in Bordetella pertussis (strain Tohama I / ATCC BAA-589 / NCTC 13251).